Reading from the N-terminus, the 215-residue chain is Ras-related protein Rab-5A (215 aa).

Ser-29, Ala-30, Gly-32, Lys-33, Ser-34, Ser-35, His-46, Glu-47, Thr-52, and Gly-78 together coordinate GTP. Residue Ser-34 coordinates Mg(2+). 2 short sequence motifs (switch) span residues 44 to 56 and 77 to 93; these read QFHE…IGAA and AGQE…YRGA. Thr-52 contacts Mg(2+). Phosphoserine is present on Ser-84. GTP is bound by residues Asn-133, Lys-134, Asp-136, Ala-164, and Lys-165. The tract at residues 181 to 215 is disordered; that stretch reads LPKNEPQNPGANSARGRGVDLTEPAQPARSQCCSN. S-geranylgeranyl cysteine attachment occurs at residues Cys-212 and Cys-213.

The protein belongs to the small GTPase superfamily. Rab family. Interacts with GDI1; this promotes dissociation from membranes; phosphorylation at Ser-84 disrupts this interaction. Interacts with GDI2; phosphorylation at Ser-84 disrupts the interaction. Interacts with EEA1. Interacts with RIN1 and GAPVD1, which regulate its pathway, probably by acting as a GEF. Interacts with RINL. Interacts with ALS2CL, SUN2, ZFYVE20 and RUFY1. Interacts with RABEP1; one RABEP1 homodimer binds two RAB5A chains, but at opposite sides of the dimer. Interacts with SGSM1 and SGSM3. Interacts with PIK3CB. Interacts with OCRL and INPP5F. May be a component of a complex composed of RAB5A, DYN2 and PIK3C3. Does not interact with BLOC-3 complex (heterodimer of HPS1 and HPS4). Interacts with CLN5. Interacts with APPL2. Interacts with F8A1/F8A2/F8A3. Found in a complex with F8A1/F8A2/F8A3, HTT and RAB5A; mediates the recruitment of HTT by RAB5A onto early endosomes. Interacts with ATP9A. Interacts with PPP1R21; mediates the recruitment of FERRY complex by RAB5A onto early endosomes. Requires Mg(2+) as cofactor. In terms of processing, phosphorylation of Ser-84 in the switch II region by LRRK2 prevents the association of RAB regulatory proteins, including RAB GDP dissociation inhibitors GDI1 and GDI2.

It localises to the cell membrane. The protein localises to the early endosome membrane. It is found in the melanosome. Its subcellular location is the cytoplasmic vesicle. The protein resides in the cell projection. It localises to the ruffle. The protein localises to the membrane. It is found in the cytoplasm. Its subcellular location is the cytosol. The protein resides in the phagosome membrane. It localises to the endosome membrane. The catalysed reaction is GTP + H2O = GDP + phosphate + H(+). With respect to regulation, regulated by guanine nucleotide exchange factors (GEFs) including RINL, which promote the exchange of bound GDP for free GTP. Regulated by GTPase activating proteins (GAPs) which increase the GTP hydrolysis activity. Inhibited by GDP dissociation inhibitors (GDIs). The small GTPases Rab are key regulators of intracellular membrane trafficking, from the formation of transport vesicles to their fusion with membranes. Rabs cycle between an inactive GDP-bound form and an active GTP-bound form that is able to recruit to membranes different sets of downstream effectors directly responsible for vesicle formation, movement, tethering and fusion. RAB5A is required for the fusion of plasma membranes and early endosomes. Contributes to the regulation of filopodia extension. Required for the exosomal release of SDCBP, CD63, PDCD6IP and syndecan. Regulates maturation of apoptotic cell-containing phagosomes, probably downstream of DYN2 and PIK3C3. The protein is Ras-related protein Rab-5A of Mus musculus (Mouse).